A 222-amino-acid polypeptide reads, in one-letter code: Ribonuclease S-3 (222 aa).

An N-terminal signal peptide occupies residues 1–22 (MVHVVMMVFLLIVLILCSSTVG). RNA is bound at residue Gln-31. A disulfide bridge connects residues Cys-37 and Cys-44. Residue Asn-40 is glycosylated (N-linked (GlcNAc...) asparagine). RNA is bound by residues His-55, 92 to 93 (NV), Phe-102, 105 to 106 (KE), and 109 to 110 (KH). His-55 functions as the Proton donor in the catalytic mechanism. Cysteines 70 and 113 form a disulfide. Residues Glu-106 and Lys-109 contribute to the active site. The active-site Proton acceptor is His-110. Asn-138 carries N-linked (GlcNAc...) asparagine glycosylation. 2 disulfides stabilise this stretch: Cys-177-Cys-215 and Cys-192-Cys-203.

It belongs to the RNase T2 family. N-linked core structure at Asn-138 contains xylose.

It carries out the reaction a ribonucleotidyl-ribonucleotide-RNA + H2O = a 3'-end 3'-phospho-ribonucleotide-RNA + a 5'-end dephospho-ribonucleoside-RNA + H(+). Self-incompatibility (SI) is the inherited ability of a flowering plant to prevent self-fertilization by discriminating between self and non-self pollen during pollination. In many species, self-incompatibility is controlled by the single, multiallelic locus S. This is Ribonuclease S-3 from Pyrus pyrifolia (Chinese pear).